A 635-amino-acid polypeptide reads, in one-letter code: MTLRSPVEFQDQFDVIVVGAGHAGCEAALATARLGCRTLLLTLNLDRIAWQPCNPAVGGPAKSQLTHEVDALGGEIGKMADRTYLQKRVLNISRGPAVWALRAQTDKREYAAVMKNIVENQPNLSIREGMVTDLVLGDNDEIQGVQTYFGACFGAQSVVITTGTFLGGKIWIGNKSMPAGRAGEFAAVGLTETLNELGFETGRLKTGTPARVDRRSVDYDKLEPQPPDEQVSWFSFDPEVWVEREQMNCYLTRTTAKTHQLIKDNLHLSPIYGGFIDSKGPRYCPSIEDKIVRFADKESHQIFIEPEGRDIPELYIQGFSTGLPENVQLAMLQTLPGLENCVMLRPAYAVEYDFLPATQCYPSLMTKKVAGLFCAGQINGTTGYEEAAAQGLVAGINAARHCQGKSLIIFSREGSYLGTLIDDLCTKDLREPYRMLTSRSEYRLILRSDNADQRLTPLGREIGLIDDRRWDLFQTKQANITAEKERLYSTRIKEQDAVGKEIVDYTQQKIKGSIVLAELLRRPGFHYPDLEKFQLGNEELKPEEKTSVEIEIKYSGYIKRQQTQIEQVSRHSQKRLPPGLNYMAIETLSMEAREKLTQFQPLTIGQAGRIGGVNPADINALLVYLETQLRRSVSP.

Gly19–Gly24 serves as a coordination point for FAD. Gly280–Phe294 contacts NAD(+).

Belongs to the MnmG family. As to quaternary structure, homodimer. Heterotetramer of two MnmE and two MnmG subunits. FAD serves as cofactor.

Its subcellular location is the cytoplasm. Functionally, NAD-binding protein involved in the addition of a carboxymethylaminomethyl (cmnm) group at the wobble position (U34) of certain tRNAs, forming tRNA-cmnm(5)s(2)U34. The protein is tRNA uridine 5-carboxymethylaminomethyl modification enzyme MnmG of Synechocystis sp. (strain ATCC 27184 / PCC 6803 / Kazusa).